Reading from the N-terminus, the 274-residue chain is tRNA-cytidine(32) 2-sulfurtransferase (274 aa).

The PP-loop motif signature appears at 40–45; the sequence is SGGKDS. [4Fe-4S] cluster-binding residues include C115, C118, and C206.

This sequence belongs to the TtcA family. Homodimer. Requires Mg(2+) as cofactor. [4Fe-4S] cluster is required as a cofactor.

It localises to the cytoplasm. It carries out the reaction cytidine(32) in tRNA + S-sulfanyl-L-cysteinyl-[cysteine desulfurase] + AH2 + ATP = 2-thiocytidine(32) in tRNA + L-cysteinyl-[cysteine desulfurase] + A + AMP + diphosphate + H(+). Its pathway is tRNA modification. Functionally, catalyzes the ATP-dependent 2-thiolation of cytidine in position 32 of tRNA, to form 2-thiocytidine (s(2)C32). The sulfur atoms are provided by the cysteine/cysteine desulfurase (IscS) system. This is tRNA-cytidine(32) 2-sulfurtransferase from Pseudomonas putida (strain GB-1).